The sequence spans 341 residues: NADH-quinone oxidoreductase subunit H 2 (341 aa).

8 consecutive transmembrane segments (helical) span residues 13–33 (IVVI…IAYI), 82–102 (GVFL…WAVI), 115–135 (VGVL…IMAG), 161–181 (IGFV…TAIV), 190–210 (VLGW…VSAL), 242–262 (LFVL…TILF), 277–297 (WVPG…MFAM), and 317–337 (VFLP…QFAG).

Belongs to the complex I subunit 1 family. As to quaternary structure, NDH-1 is composed of 14 different subunits. Subunits NuoA, H, J, K, L, M, N constitute the membrane sector of the complex.

The protein resides in the cell inner membrane. The enzyme catalyses a quinone + NADH + 5 H(+)(in) = a quinol + NAD(+) + 4 H(+)(out). Its function is as follows. NDH-1 shuttles electrons from NADH, via FMN and iron-sulfur (Fe-S) centers, to quinones in the respiratory chain. The immediate electron acceptor for the enzyme in this species is believed to be ubiquinone. Couples the redox reaction to proton translocation (for every two electrons transferred, four hydrogen ions are translocated across the cytoplasmic membrane), and thus conserves the redox energy in a proton gradient. This subunit may bind ubiquinone. The sequence is that of NADH-quinone oxidoreductase subunit H 2 from Rhodopseudomonas palustris (strain HaA2).